Consider the following 352-residue polypeptide: C-C chemokine receptor type 5 (352 aa).

At 1–30 (MDYQVSSPTYDIDYNTSEPCQKINVKQIAA) the chain is on the extracellular side. Tyr-3 carries the sulfotyrosine modification. Residues Ser-6 and Ser-7 are each glycosylated (O-linked (GalNAc...) serine). Residues Tyr-10 and Tyr-14 each carry the sulfotyrosine modification. Disulfide bonds link Cys-20–Cys-269 and Cys-101–Cys-178. The chain crosses the membrane as a helical span at residues 31 to 58 (RLLPLLYSLVFIFGFVGNILVVLILINC). Residues 59–68 (KRLKSMTDIY) are Cytoplasmic-facing. Residues 69 to 89 (LLNLAISDLLFLLTVPFWAHY) traverse the membrane as a helical segment. Over 90 to 102 (AAAQWDFGNTMCQ) the chain is Extracellular. Residues 103–124 (LLTGLYFIGFFSGIFFIILLTI) traverse the membrane as a helical segment. Topologically, residues 125 to 141 (DRYLAIVHAVFALKART) are cytoplasmic. A helical membrane pass occupies residues 142–166 (VTFGVVTSVITWVVAVFASLPRIIF). The Extracellular segment spans residues 167–198 (TRSQREGLHYTCSSHFPYSQYQFWKNFQTLKI). The chain crosses the membrane as a helical span at residues 199 to 218 (VILGLVLPLLVMVICYSGIL). Residues 219-235 (KTLLRCRNEKKRHRAVR) lie on the Cytoplasmic side of the membrane. A helical membrane pass occupies residues 236–260 (LIFTIMIVYFLFWAPYNIVLLLNTF). The Extracellular portion of the chain corresponds to 261 to 277 (QEFFGLNNCSSSNRLDQ). A helical transmembrane segment spans residues 278 to 301 (AMQVTETLGMTHCCINPIIYAFVG). Topologically, residues 302-352 (EKFRNYLLVFFQKHIAKRFCKCCSIFQQEAPERASSVYTRSTGEQEISVGL) are cytoplasmic. Residues Cys-321, Cys-323, and Cys-324 are each lipidated (S-palmitoyl cysteine). Residues Ser-336, Ser-337, Ser-342, and Ser-349 each carry the phosphoserine; by BARK1 modification.

It belongs to the G-protein coupled receptor 1 family. As to quaternary structure, interacts with PRAF2. Efficient ligand binding to CCL3/MIP-1alpha and CCL4/MIP-1beta requires sulfation, O-glycosylation and sialic acid modifications. Glycosylation on Ser-6 is required for efficient binding of CCL4. Interacts with GRK2. Interacts with ARRB1 and ARRB2. Interacts with CNIH4. Interacts with S100A4; this interaction stimulates T-lymphocyte chemotaxis. Post-translationally, sulfated on at least 2 of the N-terminal tyrosines. Sulfation is required for efficient binding of the chemokines, CCL3 and CCL4. In terms of processing, palmitoylation in the C-terminal is important for cell surface expression. Phosphorylation on serine residues in the C-terminal is stimulated by binding CC chemokines especially by APO-RANTES. Post-translationally, O-glycosylated, but not N-glycosylated. Ser-6 appears to be the major site even if Ser-7 may be also O-glycosylated. Also sialylated glycans present which contribute to chemokine binding. Thr-16 and Ser-17 may also be glycosylated and, if so, with small moieties such as a T-antigen.

The protein resides in the cell membrane. Its function is as follows. Receptor for a number of inflammatory CC-chemokines including CCL3/MIP-1-alpha, CCL4/MIP-1-beta and RANTES and subsequently transduces a signal by increasing the intracellular calcium ion level. May play a role in the control of granulocytic lineage proliferation or differentiation. Participates in T-lymphocyte migration to the infection site by acting as a chemotactic receptor. This is C-C chemokine receptor type 5 (CCR5) from Cercopithecus cephus (Moustached monkey).